Here is a 607-residue protein sequence, read N- to C-terminus: ATP-dependent RNA helicase-like protein DB10 (607 aa).

The span at 1 to 10 (MAVVTASSAG) shows a compositional bias: polar residues. Disordered stretches follow at residues 1-25 (MAVVTASSAGPSYAPEDPTLPKPWK) and 66-108 (VFVS…DGTS). A WW domain is found at 18-52 (PTLPKPWKGLVDGTTGFIYFWNPETNDTQYERPVP). Polar residues predominate over residues 89 to 98 (RGSNNKIARS). The span at 99 to 108 (SSDRFHDGTS) shows a compositional bias: basic and acidic residues. The short motif at 145–173 (TSFEATGFPSEIVREMHQAGFSAPTPIQA) is the Q motif element. The region spanning 176–350 (WPIALQGRDI…ADLLVNSVQV (175 aa)) is the Helicase ATP-binding domain. Residue 189-196 (AKTGSGKT) coordinates ATP. The DEAD box motif lies at 298 to 301 (DEAD). In terms of domain architecture, Helicase C-terminal spans 379-523 (RVEQILRSKE…CVPTELRDMA (145 aa)). Residues 519-607 (LRDMASRGGG…WSGKKSRFTD (89 aa)) form a disordered region. The segment covering 538 to 548 (SGPGGRGGRGG) has biased composition (gly residues). Positions 562–574 (GYDRGSRDSDRYG) are enriched in basic and acidic residues.

The protein belongs to the DEAD box helicase family.

The catalysed reaction is ATP + H2O = ADP + phosphate + H(+). This Nicotiana sylvestris (Wood tobacco) protein is ATP-dependent RNA helicase-like protein DB10.